Reading from the N-terminus, the 211-residue chain is Transcriptional regulator GfcR (211 aa).

This sequence belongs to the purine/pyrimidine phosphoribosyltransferase family. GfcR subfamily.

The protein is Transcriptional regulator GfcR of Methanocaldococcus jannaschii (strain ATCC 43067 / DSM 2661 / JAL-1 / JCM 10045 / NBRC 100440) (Methanococcus jannaschii).